A 142-amino-acid polypeptide reads, in one-letter code: MVLSPADKTNVKTTWDKLGGHAGEYGGEALERTFTAFPTTKTYFPHFDLSHGSAQVKAHGKKVADALTTAVAHMDDLPGALSALSDLHAYKLRVDPVNFKLLSHCLLVTLACHHPAEFTPAVHASLDKFFSAVSTVLTSKYR.

Positions 2 to 142 constitute a Globin domain; the sequence is VLSPADKTNV…VSTVLTSKYR (141 aa). His-59 lines the O2 pocket. A heme b-binding site is contributed by His-88.

This sequence belongs to the globin family. Heterotetramer of two alpha chains and two beta chains. In terms of tissue distribution, red blood cells.

In terms of biological role, involved in oxygen transport from the lung to the various peripheral tissues. The sequence is that of Hemoglobin subunit alpha-2 from Arctocephalus galapagoensis (Galapagoes fur seal).